The sequence spans 89 residues: Large ribosomal subunit protein bL27 (89 aa).

Residues 1 to 26 (MAHKKGVGSSRNGRDSESKRLGVKEG) form a disordered region. Over residues 12–26 (NGRDSESKRLGVKEG) the composition is skewed to basic and acidic residues.

Belongs to the bacterial ribosomal protein bL27 family.

The polypeptide is Large ribosomal subunit protein bL27 (Desulforamulus reducens (strain ATCC BAA-1160 / DSM 100696 / MI-1) (Desulfotomaculum reducens)).